The following is a 559-amino-acid chain: Dihydroxy-acid dehydratase (559 aa).

Residue Cys52 participates in [2Fe-2S] cluster binding. A Mg(2+)-binding site is contributed by Asp84. Cys125 serves as a coordination point for [2Fe-2S] cluster. Asp126 and Lys127 together coordinate Mg(2+). Lys127 is subject to N6-carboxylysine. Cys197 lines the [2Fe-2S] cluster pocket. Glu447 serves as a coordination point for Mg(2+). Residue Ser473 is the Proton acceptor of the active site.

It belongs to the IlvD/Edd family. As to quaternary structure, homodimer. Requires [2Fe-2S] cluster as cofactor. The cofactor is Mg(2+).

The enzyme catalyses (2R)-2,3-dihydroxy-3-methylbutanoate = 3-methyl-2-oxobutanoate + H2O. It catalyses the reaction (2R,3R)-2,3-dihydroxy-3-methylpentanoate = (S)-3-methyl-2-oxopentanoate + H2O. It participates in amino-acid biosynthesis; L-isoleucine biosynthesis; L-isoleucine from 2-oxobutanoate: step 3/4. It functions in the pathway amino-acid biosynthesis; L-valine biosynthesis; L-valine from pyruvate: step 3/4. In terms of biological role, functions in the biosynthesis of branched-chain amino acids. Catalyzes the dehydration of (2R,3R)-2,3-dihydroxy-3-methylpentanoate (2,3-dihydroxy-3-methylvalerate) into 2-oxo-3-methylpentanoate (2-oxo-3-methylvalerate) and of (2R)-2,3-dihydroxy-3-methylbutanoate (2,3-dihydroxyisovalerate) into 2-oxo-3-methylbutanoate (2-oxoisovalerate), the penultimate precursor to L-isoleucine and L-valine, respectively. The polypeptide is Dihydroxy-acid dehydratase (Roseiflexus sp. (strain RS-1)).